Consider the following 200-residue polypeptide: Recombination protein RecR (200 aa).

The C4-type zinc-finger motif lies at 59-74 (CSVCGSLDTSDPCAIC). In terms of domain architecture, Toprim spans 82–177 (RLLCVVEEVG…SVTMLARGVP (96 aa)).

This sequence belongs to the RecR family.

In terms of biological role, may play a role in DNA repair. It seems to be involved in an RecBC-independent recombinational process of DNA repair. It may act with RecF and RecO. The chain is Recombination protein RecR from Caulobacter sp. (strain K31).